The sequence spans 271 residues: Tryptophan synthase alpha chain (271 aa).

Catalysis depends on proton acceptor residues Glu-49 and Asp-60.

It belongs to the TrpA family. In terms of assembly, tetramer of two alpha and two beta chains.

It catalyses the reaction (1S,2R)-1-C-(indol-3-yl)glycerol 3-phosphate + L-serine = D-glyceraldehyde 3-phosphate + L-tryptophan + H2O. Its pathway is amino-acid biosynthesis; L-tryptophan biosynthesis; L-tryptophan from chorismate: step 5/5. In terms of biological role, the alpha subunit is responsible for the aldol cleavage of indoleglycerol phosphate to indole and glyceraldehyde 3-phosphate. This Burkholderia multivorans (strain ATCC 17616 / 249) protein is Tryptophan synthase alpha chain.